The primary structure comprises 139 residues: Drosulfakinins (139 aa).

The N-terminal stretch at 1 to 35 (MGHRGMGCAHFATMAMPLWALTFYLLVVLPVPSQT) is a signal peptide. Residues 36-71 (ASVEVGKEERRLQDLDPKMGSEAGNTDGLSLARFGS) constitute a propeptide that is removed on maturation. At Phe80 the chain carries Phenylalanine amide. A propeptide spanning residues 81-109 (GHRVPIISRPVIPIELDLLMDNEDDRTMS) is cleaved from the precursor. At Tyr115 the chain carries Sulfotyrosine. At Phe120 the chain carries Phenylalanine amide. Tyr132 bears the Sulfotyrosine mark. Phe137 carries the phenylalanine amide modification.

It belongs to the gastrin/cholecystokinin family.

The protein resides in the secreted. Its function is as follows. Drosulfakinin-0 (DSK 0) plays diverse biological roles including regulating gut muscle contraction in adults but not in larvae. The chain is Drosulfakinins from Drosophila pseudoobscura pseudoobscura (Fruit fly).